Here is a 194-residue protein sequence, read N- to C-terminus: ATP-dependent Clp protease proteolytic subunit (194 aa).

Ser-98 acts as the Nucleophile in catalysis. His-123 is an active-site residue.

It belongs to the peptidase S14 family. In terms of assembly, fourteen ClpP subunits assemble into 2 heptameric rings which stack back to back to give a disk-like structure with a central cavity, resembling the structure of eukaryotic proteasomes.

It is found in the cytoplasm. It catalyses the reaction Hydrolysis of proteins to small peptides in the presence of ATP and magnesium. alpha-casein is the usual test substrate. In the absence of ATP, only oligopeptides shorter than five residues are hydrolyzed (such as succinyl-Leu-Tyr-|-NHMec, and Leu-Tyr-Leu-|-Tyr-Trp, in which cleavage of the -Tyr-|-Leu- and -Tyr-|-Trp bonds also occurs).. Functionally, cleaves peptides in various proteins in a process that requires ATP hydrolysis. Has a chymotrypsin-like activity. Plays a major role in the degradation of misfolded proteins. This chain is ATP-dependent Clp protease proteolytic subunit, found in Wigglesworthia glossinidia brevipalpis.